Here is a 331-residue protein sequence, read N- to C-terminus: MPKPLVDFGNKPMILHQIEALKGAGVTEVVLAINHQQPEVMLNFVKEYEKKLEIKITFSQETEPLGTAGPLALARDKLVDESGQPFFVLNSDVICEYPLLEMIEFHKTNRAEASIMVTEVDDPSKYGVVVTEEGTARVESFVEKPKHFVGNKINAGIYLLSPSVLDRIELRRTSIEKEIFPKIASEKKLYAMVLPGFWMDIGQPKDYITGQRMYLNSLREKTPQELATGDNIIGNVLVHESAVIGEGCLIGPDVVIGPGCVIDSGVRLFGCTVMRGVWIKEHACISNSIVGWDSTVGRWARVFNITVLGKDVNVADAEVYNSGVVIEEQGL.

Diphosphate is bound at residue K3. GDP-alpha-D-mannose-binding residues include G66, N90, D92, G127, and N154.

This sequence belongs to the transferase hexapeptide repeat family.

It carries out the reaction alpha-D-mannose 1-phosphate + GTP + H(+) = GDP-alpha-D-mannose + diphosphate. It functions in the pathway nucleotide-sugar biosynthesis; GDP-alpha-D-mannose biosynthesis; GDP-alpha-D-mannose from alpha-D-mannose 1-phosphate (GTP route): step 1/1. Functionally, catalyzes a reaction of the Smirnoff-Wheeler pathway, the major route to ascorbate biosynthesis in plants. The polypeptide is Probable mannose-1-phosphate guanylyltransferase 3 (Arabidopsis thaliana (Mouse-ear cress)).